The following is a 332-amino-acid chain: 2,3-diketo-L-gulonate reductase (332 aa).

H44 acts as the Proton donor in catalysis. NAD(+) contacts are provided by residues 168 to 174, 224 to 225, and 304 to 306; these read ITMVDMS, WK, and GHE.

It belongs to the LDH2/MDH2 oxidoreductase family. DlgD subfamily. As to quaternary structure, homodimer.

Its subcellular location is the cytoplasm. It carries out the reaction 3-dehydro-L-gulonate + NAD(+) = 2,3-dioxo-L-gulonate + NADH + H(+). The enzyme catalyses 3-dehydro-L-gulonate + NADP(+) = 2,3-dioxo-L-gulonate + NADPH + H(+). Its function is as follows. Catalyzes the reduction of 2,3-diketo-L-gulonate in the presence of NADH, to form 3-keto-L-gulonate. The polypeptide is 2,3-diketo-L-gulonate reductase (Salmonella paratyphi A (strain ATCC 9150 / SARB42)).